Here is a 77-residue protein sequence, read N- to C-terminus: UPF0248 protein Pcal_0252 (77 aa).

The protein belongs to the UPF0248 family.

The chain is UPF0248 protein Pcal_0252 from Pyrobaculum calidifontis (strain DSM 21063 / JCM 11548 / VA1).